We begin with the raw amino-acid sequence, 185 residues long: MINDIQKTAEGKMQRSVEVLKENLAKVRTGRAHTGLLDQVEVEYWGSMVPVSQVANVTLLDARTIGVKPFEGNMAAKVEKAIRDSNLGLNPAAVGDLIRVPMPMLTEERRKDLIKVVRGEAEEGRVSIRNVRRDANDHIKKLLKDKEISEDEARRGEEAVQKLTDKYIAEADKVLAAKEEDLMAV.

Belongs to the RRF family.

Its subcellular location is the cytoplasm. Responsible for the release of ribosomes from messenger RNA at the termination of protein biosynthesis. May increase the efficiency of translation by recycling ribosomes from one round of translation to another. The chain is Ribosome-recycling factor from Neisseria gonorrhoeae (strain ATCC 700825 / FA 1090).